Here is a 421-residue protein sequence, read N- to C-terminus: Nuclear envelope integral membrane protein 2 (421 aa).

Positions 1–22 are cleaved as a signal peptide; that stretch reads MPPGSWWLVLWLPPLATLPAGA. Helical transmembrane passes span 147–167, 175–195, 206–226, 232–252, and 279–299; these read NVVDFRLFLVFATGIFLFFYA, VFYYSSGTVLGILMTLVFVLL, TFGALMIGCWFASVYVLCQLM, LWCGNRIYVLGYVLVVGLCSF, and LVLVYTGMAISQFAYAVMILL.

The protein belongs to the NEMP family.

It is found in the nucleus inner membrane. The chain is Nuclear envelope integral membrane protein 2 (Nemp2) from Rattus norvegicus (Rat).